Consider the following 329-residue polypeptide: MSILSFQMPEKVVMEKADDFHGLFEFKPLEKGYGVTIGNALRRILLSSLEGYAITGIKVPGVLHEFSTIPGVREDVTEIILNLKQVRFKKISDVNENKIVVSIKKQASFKAGDIAKFTSAYQILNPELLICNVDSNSNFDIELTLEKGRGYLPAEENKPAEQIFGYIPIDAIFTPIKNVKYSVENTRVEQRTDYEKLILEILTDGSIHPEDALKGAANILIKHFMLFSDQTMTFEAVKAEEEETVDEEFLHMRKLLKTSLADLDLSVRAYNCLKAADIKTLGELATLDISDMMKFRNFGKKSLNELEQLIIDKNLSFGMDTAKYKLDED.

Positions 1-231 (MSILSFQMPE…KHFMLFSDQT (231 aa)) are alpha N-terminal domain (alpha-NTD). Residues 247–329 (EEFLHMRKLL…DTAKYKLDED (83 aa)) form an alpha C-terminal domain (alpha-CTD) region.

This sequence belongs to the RNA polymerase alpha chain family. In terms of assembly, homodimer. The RNAP catalytic core consists of 2 alpha, 1 beta, 1 beta' and 1 omega subunit. When a sigma factor is associated with the core the holoenzyme is formed, which can initiate transcription.

The enzyme catalyses RNA(n) + a ribonucleoside 5'-triphosphate = RNA(n+1) + diphosphate. DNA-dependent RNA polymerase catalyzes the transcription of DNA into RNA using the four ribonucleoside triphosphates as substrates. This is DNA-directed RNA polymerase subunit alpha from Cytophaga hutchinsonii (strain ATCC 33406 / DSM 1761 / CIP 103989 / NBRC 15051 / NCIMB 9469 / D465).